The chain runs to 250 residues: Testis-expressed protein 101 (250 aa).

An N-terminal signal peptide occupies residues 1 to 25 (MGACRIQYVLLIFLLIASRWTLVQN). 4 N-linked (GlcNAc...) asparagine glycosylation sites follow: Asn45, Asn110, Asn134, and Asn160. Positions 141 to 215 (CPTCVALGSC…VKETCSYQSF (75 aa)) constitute a UPAR/Ly6 domain. Residue Gly224 is the site of GPI-anchor amidated glycine attachment. Residues 225–250 (ASQMPTSLWVLELLFPLLLLPLTHFP) constitute a propeptide, removed in mature form.

As to quaternary structure, interacts with VAMP3. Interacts with LY6K. Interacts with DPEP3; co-localized on the cell surface of spermatocytes, spermatids, and testicular spermatozoa, co-localized only in cytoplasmic droplets of caput and corpus epididymal sperm. Interacts with ADAM3; co-localized on sperm surface. Interacts with ADAM5. N-glycosylated; by high mannose and/or biantennary complex and/or certain types of hybrid oligosaccharides; possesses different oligosaccharides chains according to its subcellular localization in the testis. In terms of processing, sheds from membrane raft by ACE and released from the cell surface of epididymal sperm while it passes through the caput epididymis leading to disappearance of TEX101 on spermatozoa; is essential to produce fertile spermatozoa. As to expression, detected in testis and ovary. Expressed in spermatocytes, spermatids and testicular spermatozoa, but not in spermatogonia or interstitial cells. Expressed abundantly in testicular germ cells (TGCs) but mostly disappeared from epididymal spermatozoa.

The protein localises to the cell membrane. It localises to the membrane raft. It is found in the cytoplasmic vesicle. Its subcellular location is the secretory vesicle. The protein resides in the acrosome. The protein localises to the secreted. In terms of biological role, plays a role in fertilization by controlling binding of sperm to zona pellucida and migration of spermatozoa into the oviduct probably through molecule adhesion ADAM3. May play a role in signal transduction and promote protein tyrosine phosphorylation. This Mus musculus (Mouse) protein is Testis-expressed protein 101.